Reading from the N-terminus, the 122-residue chain is Small ribosomal subunit protein uS13 (122 aa).

The segment at 93–122 (RRGLPVRGQKTKTNARTRKGPKKTMANKKK) is disordered.

The protein belongs to the universal ribosomal protein uS13 family. In terms of assembly, part of the 30S ribosomal subunit. Forms a loose heterodimer with protein S19. Forms two bridges to the 50S subunit in the 70S ribosome.

Located at the top of the head of the 30S subunit, it contacts several helices of the 16S rRNA. In the 70S ribosome it contacts the 23S rRNA (bridge B1a) and protein L5 of the 50S subunit (bridge B1b), connecting the 2 subunits; these bridges are implicated in subunit movement. Contacts the tRNAs in the A and P-sites. The protein is Small ribosomal subunit protein uS13 of Clostridium botulinum (strain Alaska E43 / Type E3).